A 473-amino-acid polypeptide reads, in one-letter code: PTS system trehalose-specific EIIBC component (473 aa).

The PTS EIIB type-1 domain maps to 1 to 89; it reads MMSKINQTDI…IASTGQAQVD (89 aa). The Cytoplasmic portion of the chain corresponds to 1–110; that stretch reads MMSKINQTDI…MKWHEQLISH (110 aa). The active-site Phosphocysteine intermediate; for EIIB activity is Cys29. Cys29 carries the phosphocysteine; by EIIA modification. Residues 109-473 enclose the PTS EIIC type-1 domain; sequence SHFAVIFFPL…KYRLGTLDIV (365 aa). The helical transmembrane segment at 111–131 threads the bilayer; sequence FAVIFFPLLPALISGGLILGF. Topologically, residues 132–158 are periplasmic; the sequence is RNVIGDLPMSNGQTLAQMYPSLQTIYD. Residues 159–179 traverse the membrane as a helical segment; that stretch reads FLWLIGEAIFFYLPVGICWSA. Over 180–187 the chain is Cytoplasmic; the sequence is VKKMGGTP. The chain crosses the membrane as a helical span at residues 188–208; that stretch reads ILGIVLGVTLVSPQLMNAYLL. The Periplasmic portion of the chain corresponds to 209 to 225; that stretch reads GQQLPEVWDFGMFSIAK. The chain crosses the membrane as a helical span at residues 226-246; it reads VGYQAQVIPALLAGLALGVIE. Residues 247-258 are Cytoplasmic-facing; it reads TRLKRIVPDYLY. The chain crosses the membrane as a helical span at residues 259–279; it reads LVVVPVCSLILAVFLAHALIG. The Periplasmic portion of the chain corresponds to 280–300; sequence PFGRMIGDGVAFAVRHLMTGS. Residues 301–321 traverse the membrane as a helical segment; the sequence is FAPIGAALFGFLYAPLVITGV. The Cytoplasmic portion of the chain corresponds to 322–340; sequence HQTTLAIDLQMIQSMGGTP. A helical membrane pass occupies residues 341–361; it reads VWPLIALSNIAQGSAVIGIII. Residues 362–370 lie on the Periplasmic side of the membrane; sequence SSRKHNERE. Residues 371-391 traverse the membrane as a helical segment; the sequence is ISVPAAISAWLGVTEPAMYGI. Topologically, residues 392 to 398 are cytoplasmic; sequence NLKYRFP. Residues 399 to 419 traverse the membrane as a helical segment; that stretch reads MLCAMIGSGLAGLLCGLNGVM. Over 420–440 the chain is Periplasmic; sequence ANGIGVGGLPGILSIQPSYWQ. A helical membrane pass occupies residues 441–461; the sequence is VFALAMAIAIIIPIVLTSFIY. Over 462-473 the chain is Cytoplasmic; that stretch reads QRKYRLGTLDIV.

It is found in the cell inner membrane. It catalyses the reaction alpha,alpha-trehalose(out) + N(pros)-phospho-L-histidyl-[protein] = alpha,alpha-trehalose 6-phosphate(in) + L-histidyl-[protein]. Functionally, the phosphoenolpyruvate-dependent sugar phosphotransferase system (sugar PTS), a major carbohydrate active transport system, catalyzes the phosphorylation of incoming sugar substrates concomitantly with their translocation across the cell membrane. This system is involved in trehalose transport at low osmolarity. The sequence is that of PTS system trehalose-specific EIIBC component (treB) from Escherichia coli (strain K12).